A 185-amino-acid polypeptide reads, in one-letter code: Large ribosomal subunit protein bL25 (185 aa).

Belongs to the bacterial ribosomal protein bL25 family. CTC subfamily. In terms of assembly, part of the 50S ribosomal subunit; part of the 5S rRNA/L5/L18/L25 subcomplex. Contacts the 5S rRNA. Binds to the 5S rRNA independently of L5 and L18.

Its function is as follows. This is one of the proteins that binds to the 5S RNA in the ribosome where it forms part of the central protuberance. The sequence is that of Large ribosomal subunit protein bL25 from Chlamydia pneumoniae (Chlamydophila pneumoniae).